The chain runs to 695 residues: Glycine--tRNA ligase beta subunit (695 aa).

This sequence belongs to the class-II aminoacyl-tRNA synthetase family. As to quaternary structure, tetramer of two alpha and two beta subunits.

It is found in the cytoplasm. It catalyses the reaction tRNA(Gly) + glycine + ATP = glycyl-tRNA(Gly) + AMP + diphosphate. This chain is Glycine--tRNA ligase beta subunit, found in Desulforamulus reducens (strain ATCC BAA-1160 / DSM 100696 / MI-1) (Desulfotomaculum reducens).